The chain runs to 334 residues: Desumoylating isopeptidase 1 homolog (334 aa).

Residues 30–174 enclose the PPPDE domain; that stretch reads TVVRLNVYDM…FLEKCIPQEW (145 aa). Residues H55 and C133 contribute to the active site. Positions 310 to 325 are enriched in polar residues; sequence SNIGKTNSTPGTTSNG. The disordered stretch occupies residues 310-334; that stretch reads SNIGKTNSTPGTTSNGLAKPTCSEC.

This sequence belongs to the DeSI family. In terms of tissue distribution, expressed in the pharynx, hypodermis, intestine, head neuron and tail neuron.

It localises to the cytoplasm. The protein localises to the nucleus. In terms of biological role, protease which deconjugates SUMO from some substrate proteins. Has isopeptidase but not SUMO-processing activity. Collaborates with ubql-1 in the export of ubiquitinated proteins from the nucleus to the cytoplasm. The protein is Desumoylating isopeptidase 1 homolog of Caenorhabditis elegans.